A 60-amino-acid chain; its full sequence is Ferredoxin (60 aa).

2 consecutive 4Fe-4S ferredoxin-type domains span residues 2 to 30 (VTID…EIQG) and 31 to 60 (DKVV…TVKE). 8 residues coordinate [4Fe-4S] cluster: cysteine 9, cysteine 14, cysteine 17, cysteine 21, cysteine 41, cysteine 44, cysteine 47, and cysteine 51.

[4Fe-4S] cluster is required as a cofactor.

Its function is as follows. Ferredoxins are iron-sulfur proteins that transfer electrons probably in the CO-dehydrogenase complex. This chain is Ferredoxin, found in Methanothermococcus thermolithotrophicus (Methanococcus thermolithotrophicus).